We begin with the raw amino-acid sequence, 351 residues long: D-alanine--D-alanine ligase (351 aa).

Residues 146–340 enclose the ATP-grasp domain; sequence KEIMLYNNIK…YEDLCESIVL (195 aa). Residue 173-226 coordinates ATP; it reads AFDYPMVVKPNSGGSSIGTRIVHDEAELAESLKDAYRFDDEIIVEEFITGREFS. Residues aspartate 295, glutamate 307, and asparagine 309 each contribute to the Mg(2+) site.

It belongs to the D-alanine--D-alanine ligase family. It depends on Mg(2+) as a cofactor. Mn(2+) serves as cofactor.

It localises to the cytoplasm. The catalysed reaction is 2 D-alanine + ATP = D-alanyl-D-alanine + ADP + phosphate + H(+). Its pathway is cell wall biogenesis; peptidoglycan biosynthesis. Functionally, cell wall formation. The chain is D-alanine--D-alanine ligase from Pediococcus pentosaceus (strain ATCC 25745 / CCUG 21536 / LMG 10740 / 183-1w).